The chain runs to 146 residues: [Ribosomal protein bS18]-alanine N-acetyltransferase (146 aa).

The 145-residue stretch at 2–146 (SIISQIEACD…ENAVVMACYL (145 aa)) folds into the N-acetyltransferase domain. 69–71 (IAI) contacts acetyl-CoA. Catalysis depends on Glu-103, which acts as the Proton acceptor. Acetyl-CoA is bound at residue Asn-108. Residue Tyr-114 is the Proton donor of the active site.

It belongs to the acetyltransferase family. RimI subfamily.

It localises to the cytoplasm. The catalysed reaction is N-terminal L-alanyl-[ribosomal protein bS18] + acetyl-CoA = N-terminal N(alpha)-acetyl-L-alanyl-[ribosomal protein bS18] + CoA + H(+). Acetylates the N-terminal alanine of ribosomal protein bS18. The chain is [Ribosomal protein bS18]-alanine N-acetyltransferase from Haemophilus influenzae (strain ATCC 51907 / DSM 11121 / KW20 / Rd).